A 311-amino-acid polypeptide reads, in one-letter code: Formimidoylglutamase (311 aa).

Residues His122, Asp151, His153, Asp155, Cys242, and Asp244 each contribute to the Mn(2+) site.

Belongs to the arginase family. As to quaternary structure, homodimer. Mn(2+) serves as cofactor.

The enzyme catalyses N-formimidoyl-L-glutamate + H2O = formamide + L-glutamate. The protein operates within amino-acid degradation; L-histidine degradation into L-glutamate; L-glutamate from N-formimidoyl-L-glutamate (hydrolase route): step 1/1. Its function is as follows. Catalyzes the conversion of N-formimidoyl-L-glutamate to L-glutamate and formamide. The chain is Formimidoylglutamase from Pseudomonas aeruginosa (strain ATCC 15692 / DSM 22644 / CIP 104116 / JCM 14847 / LMG 12228 / 1C / PRS 101 / PAO1).